The chain runs to 454 residues: Probable glycine dehydrogenase (decarboxylating) subunit 1 (454 aa).

Belongs to the GcvP family. N-terminal subunit subfamily. The glycine cleavage system is composed of four proteins: P, T, L and H. In this organism, the P 'protein' is a heterodimer of two subunits.

The catalysed reaction is N(6)-[(R)-lipoyl]-L-lysyl-[glycine-cleavage complex H protein] + glycine + H(+) = N(6)-[(R)-S(8)-aminomethyldihydrolipoyl]-L-lysyl-[glycine-cleavage complex H protein] + CO2. Its function is as follows. The glycine cleavage system catalyzes the degradation of glycine. The P protein binds the alpha-amino group of glycine through its pyridoxal phosphate cofactor; CO(2) is released and the remaining methylamine moiety is then transferred to the lipoamide cofactor of the H protein. The polypeptide is Probable glycine dehydrogenase (decarboxylating) subunit 1 (Sorangium cellulosum (strain So ce56) (Polyangium cellulosum (strain So ce56))).